Here is a 1191-residue protein sequence, read N- to C-terminus: Laminin subunit gamma-2 (1191 aa).

The first 21 residues, 1–21 (MPALWLSCCLGVALLLPAAQA), serve as a signal peptide directing secretion. Cystine bridges form between Cys-28–Cys-37, Cys-30–Cys-53, Cys-56–Cys-65, Cys-68–Cys-81, Cys-84–Cys-96, Cys-86–Cys-102, Cys-104–Cys-113, Cys-116–Cys-128, Cys-139–Cys-150, Cys-141–Cys-155, Cys-157–Cys-166, and Cys-169–Cys-184. 3 consecutive Laminin EGF-like domains span residues 28–83 (CDCN…RCLP), 84–130 (CNCH…GCTR), and 139–186 (CDCD…GCTQ). The Laminin EGF-like 4; first part domain maps to 187-196 (CFCYGHSASC). Residues 213–381 (QDVDGWKAVQ…SGAPAPWVER (169 aa)) enclose the Laminin IV type A domain. Asn-342 and Asn-362 each carry an N-linked (GlcNAc...) asparagine glycan. The 34-residue stretch at 382–415 (CVCPAGYKGQFCQECASGYKRDSARLGPFGACVP) folds into the Laminin EGF-like 4; second part domain. Laminin EGF-like domains follow at residues 416 to 461 (CNCQ…SCKP), 462 to 516 (CPCH…PCQR), and 517 to 572 (CQCN…KCRA). 11 disulfide bridges follow: Cys-462–Cys-470, Cys-464–Cys-481, Cys-484–Cys-493, Cys-496–Cys-514, Cys-517–Cys-531, Cys-519–Cys-538, Cys-541–Cys-550, Cys-553–Cys-570, Cys-573–Cys-585, Cys-575–Cys-591, and Cys-593–Cys-602. An N-linked (GlcNAc...) asparagine glycan is attached at Asn-526. Positions 573–602 (CNCSPMGSEPGECRGDGSCVCKPGFGGLNC) constitute a Laminin EGF-like 8; truncated domain. A Cell attachment site motif is present at residues 586 to 588 (RGD). The domain II and I stretch occupies residues 603 to 1191 (DHAALTSCPA…CYNTQALEQQ (589 aa)). Coiled-coil stretches lie at residues 612–710 (ACYN…IRAL) and 759–786 (LAQE…ETED). Ser-805 carries O-linked (Xyl...) (chondroitin sulfate) serine glycosylation. N-linked (GlcNAc...) asparagine glycosylation is present at Asn-941. Positions 946–996 (EVENILKNLREFDLQVEDRKAEAEEAMKRLSSISQKVADASDKTQQAETAL) form a coiled coil. An N-linked (GlcNAc...) asparagine glycan is attached at Asn-1032. The stretch at 1139-1178 (LMSDLEERVRRQRNHLHLLETSIDGILADVKNLENIRDNL) forms a coiled coil.

In terms of assembly, laminin is a complex glycoprotein, consisting of three different polypeptide chains (alpha, beta, gamma), which are bound to each other by disulfide bonds into a cross-shaped molecule comprising one long and three short arms with globules at each end. Gamma-2 is a subunit of laminin-5 (laminin-332 or epiligrin/kalinin/nicein). Binds to fibulin-1, fibulin-1c, fibulin-2 and nidogen. In terms of processing, O-glycosylated; contains chondroitin sulfate (CS). As to expression, epithelial cells of many tissues, particularly high levels in tongue, hair follicles and kidney. Basement membranes of the collecting tubules of kidney and pancreas.

The protein resides in the secreted. It is found in the extracellular space. It localises to the extracellular matrix. The protein localises to the basement membrane. Its function is as follows. Binding to cells via a high affinity receptor, laminin is thought to mediate the attachment, migration and organization of cells into tissues during embryonic development by interacting with other extracellular matrix components. The protein is Laminin subunit gamma-2 (Lamc2) of Mus musculus (Mouse).